We begin with the raw amino-acid sequence, 90 residues long: Small ribosomal subunit protein bS16 (90 aa).

This sequence belongs to the bacterial ribosomal protein bS16 family.

In Lactococcus lactis subsp. cremoris (strain MG1363), this protein is Small ribosomal subunit protein bS16.